The primary structure comprises 565 residues: Proline--tRNA ligase (565 aa).

It belongs to the class-II aminoacyl-tRNA synthetase family. ProS type 1 subfamily. In terms of assembly, homodimer.

Its subcellular location is the cytoplasm. It catalyses the reaction tRNA(Pro) + L-proline + ATP = L-prolyl-tRNA(Pro) + AMP + diphosphate. Its function is as follows. Catalyzes the attachment of proline to tRNA(Pro) in a two-step reaction: proline is first activated by ATP to form Pro-AMP and then transferred to the acceptor end of tRNA(Pro). As ProRS can inadvertently accommodate and process non-cognate amino acids such as alanine and cysteine, to avoid such errors it has two additional distinct editing activities against alanine. One activity is designated as 'pretransfer' editing and involves the tRNA(Pro)-independent hydrolysis of activated Ala-AMP. The other activity is designated 'posttransfer' editing and involves deacylation of mischarged Ala-tRNA(Pro). The misacylated Cys-tRNA(Pro) is not edited by ProRS. This chain is Proline--tRNA ligase, found in Lactobacillus delbrueckii subsp. bulgaricus (strain ATCC 11842 / DSM 20081 / BCRC 10696 / JCM 1002 / NBRC 13953 / NCIMB 11778 / NCTC 12712 / WDCM 00102 / Lb 14).